The chain runs to 83 residues: uncharacterized protein (83 aa).

The next 3 membrane-spanning stretches (helical) occupy residues 4 to 24 (AILS…GVLM), 32 to 52 (IGNI…LKAF), and 54 to 74 (YYDL…IIIG).

The protein localises to the cell membrane. This is an uncharacterized protein from Methanocaldococcus jannaschii (strain ATCC 43067 / DSM 2661 / JAL-1 / JCM 10045 / NBRC 100440) (Methanococcus jannaschii).